Consider the following 26-residue polypeptide: Citropin-2.1.3 (26 aa).

As to expression, expressed by the dorsal and submental skin glands.

Its subcellular location is the secreted. In Ranoidea citropa (Australian Blue Mountains tree frog), this protein is Citropin-2.1.3.